A 270-amino-acid chain; its full sequence is Putative phosphoenolpyruvate synthase regulatory protein (270 aa).

ADP is bound at residue 150-157 (GVSRCGKT).

Belongs to the pyruvate, phosphate/water dikinase regulatory protein family. PSRP subfamily.

It carries out the reaction [pyruvate, water dikinase] + ADP = [pyruvate, water dikinase]-phosphate + AMP + H(+). The enzyme catalyses [pyruvate, water dikinase]-phosphate + phosphate + H(+) = [pyruvate, water dikinase] + diphosphate. Bifunctional serine/threonine kinase and phosphorylase involved in the regulation of the phosphoenolpyruvate synthase (PEPS) by catalyzing its phosphorylation/dephosphorylation. In Shewanella denitrificans (strain OS217 / ATCC BAA-1090 / DSM 15013), this protein is Putative phosphoenolpyruvate synthase regulatory protein.